The chain runs to 232 residues: 7-cyano-7-deazaguanine synthase (232 aa).

7 to 17 (CSGGLDSVSLA) provides a ligand contact to ATP. Cys185, Cys193, Cys196, and Cys199 together coordinate Zn(2+).

This sequence belongs to the QueC family. Zn(2+) is required as a cofactor.

The enzyme catalyses 7-carboxy-7-deazaguanine + NH4(+) + ATP = 7-cyano-7-deazaguanine + ADP + phosphate + H2O + H(+). The protein operates within purine metabolism; 7-cyano-7-deazaguanine biosynthesis. Functionally, catalyzes the ATP-dependent conversion of 7-carboxy-7-deazaguanine (CDG) to 7-cyano-7-deazaguanine (preQ(0)). This chain is 7-cyano-7-deazaguanine synthase, found in Brucella anthropi (strain ATCC 49188 / DSM 6882 / CCUG 24695 / JCM 21032 / LMG 3331 / NBRC 15819 / NCTC 12168 / Alc 37) (Ochrobactrum anthropi).